We begin with the raw amino-acid sequence, 209 residues long: Uracil phosphoribosyltransferase (209 aa).

5-phospho-alpha-D-ribose 1-diphosphate is bound by residues arginine 79, arginine 104, and aspartate 131–serine 139. Uracil is bound by residues isoleucine 194 and glycine 199–alanine 201. Aspartate 200 contacts 5-phospho-alpha-D-ribose 1-diphosphate.

This sequence belongs to the UPRTase family. It depends on Mg(2+) as a cofactor.

It catalyses the reaction UMP + diphosphate = 5-phospho-alpha-D-ribose 1-diphosphate + uracil. It participates in pyrimidine metabolism; UMP biosynthesis via salvage pathway; UMP from uracil: step 1/1. Its activity is regulated as follows. Allosterically activated by GTP. Catalyzes the conversion of uracil and 5-phospho-alpha-D-ribose 1-diphosphate (PRPP) to UMP and diphosphate. The chain is Uracil phosphoribosyltransferase from Rhizobium leguminosarum bv. trifolii (strain WSM2304).